A 194-amino-acid polypeptide reads, in one-letter code: Mitochondrial inner membrane protease ATP23 (194 aa).

The tract at residues 1 to 20 is disordered; it reads MEDAAAPNSGSEFNPGARRG. His96 is a binding site for Zn(2+). The active site involves Glu97. Zn(2+) is bound at residue His100.

Belongs to the peptidase M76 family.

It is found in the mitochondrion inner membrane. Its function is as follows. Has a dual role in the assembly of mitochondrial ATPase. Acts as a protease that removes the N-terminal 10 residues of mitochondrial ATPase CF(0) subunit 6 (ATP6) at the intermembrane space side. Also involved in the correct assembly of the membrane-embedded ATPase CF(0) particle, probably mediating association of ATP6 with the subunit 9 ring. The sequence is that of Mitochondrial inner membrane protease ATP23 from Arabidopsis thaliana (Mouse-ear cress).